Reading from the N-terminus, the 479-residue chain is MISMTKTVYIKTVGCQMNVLDSEMVIADLKRHGYTVVDTPGEADLLLYNTCSIREQAEEKTYSALGKLKETKARHPEKTIGVMGCMAQKDQETIFRRAPFVDMVVGPGQLHAIPDMLTKVTSGEGRQMAVSLGRKDGKQTVVARSHETFDPLRDPTMRPTPFQAYLRIQIGCDKFCTYCVVPNTRGPEQGRSPEEIVSEARVLAEQGALEITLLGQTVNSYRHRGPDGETDMAGLLERLHDIDGLKRIKFVTNYPKDMTARLLETIRDLPKVSPYLHVPAQSGSDAVLKRMKRGYTIADYMEMFERIETVLPEASVSSDFIVGFCGETDEDFQKSVKLIERCRFKNSFIFQYSVREGTKAAANLIDDVPREVKAARNNELLAVQDRISKEDNQKLIGDTVEVLVEGPSKKADKSDLDAPIVQMTGRTICDRIVVFDGNRRQAGQLMDIQIDDVSSHTLIGRVKTVEVVSLGMPGLAPSS.

An MTTase N-terminal domain is found at 6 to 122 (KTVYIKTVGC…IPDMLTKVTS (117 aa)). Residues Cys15, Cys51, Cys85, Cys172, Cys176, and Cys179 each coordinate [4Fe-4S] cluster. The region spanning 158-390 (RPTPFQAYLR…LAVQDRISKE (233 aa)) is the Radical SAM core domain. Positions 393 to 464 (QKLIGDTVEV…SHTLIGRVKT (72 aa)) constitute a TRAM domain.

It belongs to the methylthiotransferase family. MiaB subfamily. Monomer. The cofactor is [4Fe-4S] cluster.

It localises to the cytoplasm. The enzyme catalyses N(6)-dimethylallyladenosine(37) in tRNA + (sulfur carrier)-SH + AH2 + 2 S-adenosyl-L-methionine = 2-methylsulfanyl-N(6)-dimethylallyladenosine(37) in tRNA + (sulfur carrier)-H + 5'-deoxyadenosine + L-methionine + A + S-adenosyl-L-homocysteine + 2 H(+). Functionally, catalyzes the methylthiolation of N6-(dimethylallyl)adenosine (i(6)A), leading to the formation of 2-methylthio-N6-(dimethylallyl)adenosine (ms(2)i(6)A) at position 37 in tRNAs that read codons beginning with uridine. This is tRNA-2-methylthio-N(6)-dimethylallyladenosine synthase from Rhodopirellula baltica (strain DSM 10527 / NCIMB 13988 / SH1).